The following is a 535-amino-acid chain: T-complex protein 1 subunit epsilon (535 aa).

Belongs to the TCP-1 chaperonin family. As to quaternary structure, heterooligomeric complex of about 850 to 900 kDa that forms two stacked rings, 12 to 16 nm in diameter.

It is found in the cytoplasm. Its function is as follows. Molecular chaperone; assists the folding of proteins upon ATP hydrolysis. Known to play a role, in vitro, in the folding of actin and tubulin. This Avena sativa (Oat) protein is T-complex protein 1 subunit epsilon.